A 180-amino-acid chain; its full sequence is Putative manganese efflux pump MntP (180 aa).

Helical transmembrane passes span 4–24 (FVTI…VALG), 40–60 (LTIG…GKWL), 64–84 (FDVI…VQMA), 103–123 (LLLF…SFGI), 129–149 (FVTV…GLIV), and 156–176 (FLGA…GLKI).

This sequence belongs to the MntP (TC 9.B.29) family.

The protein localises to the cell membrane. Its function is as follows. Probably functions as a manganese efflux pump. The chain is Putative manganese efflux pump MntP from Shouchella clausii (strain KSM-K16) (Alkalihalobacillus clausii).